A 264-amino-acid polypeptide reads, in one-letter code: Thymidylate synthase (264 aa).

R21 provides a ligand contact to dUMP. H51 contributes to the (6R)-5,10-methylene-5,6,7,8-tetrahydrofolate binding site. Position 126 to 127 (126 to 127 (RR)) interacts with dUMP. C146 functions as the Nucleophile in the catalytic mechanism. DUMP is bound by residues 166-169 (RSCD), N177, and 207-209 (HLY). D169 is a binding site for (6R)-5,10-methylene-5,6,7,8-tetrahydrofolate. A (6R)-5,10-methylene-5,6,7,8-tetrahydrofolate-binding site is contributed by A263.

It belongs to the thymidylate synthase family. Bacterial-type ThyA subfamily. In terms of assembly, homodimer.

The protein localises to the cytoplasm. The enzyme catalyses dUMP + (6R)-5,10-methylene-5,6,7,8-tetrahydrofolate = 7,8-dihydrofolate + dTMP. It functions in the pathway pyrimidine metabolism; dTTP biosynthesis. Its function is as follows. Catalyzes the reductive methylation of 2'-deoxyuridine-5'-monophosphate (dUMP) to 2'-deoxythymidine-5'-monophosphate (dTMP) while utilizing 5,10-methylenetetrahydrofolate (mTHF) as the methyl donor and reductant in the reaction, yielding dihydrofolate (DHF) as a by-product. This enzymatic reaction provides an intracellular de novo source of dTMP, an essential precursor for DNA biosynthesis. The protein is Thymidylate synthase of Escherichia coli O9:H4 (strain HS).